The chain runs to 2531 residues: Mediator of RNA polymerase II transcription subunit 12 (2531 aa).

4 disordered regions span residues 1–41, 204–283, 584–604, and 742–762; these read MLSM…VKHG, QNHD…GSVM, VSRRREEDQVEPRPPYEPKQD, and TTATKTSPPPPAPPPTTTHGF. Residues 210 to 247 show a composition bias toward low complexity; the sequence is SSNGTTSGSLTAAGNGPASNGSTGTSSINSVTGSSAST. The span at 586 to 604 shows a compositional bias: basic and acidic residues; it reads RRREEDQVEPRPPYEPKQD. Threonine 745 is modified (phosphothreonine). Residues serine 748 and serine 781 each carry the phosphoserine modification. The span at 748–757 shows a compositional bias: pro residues; sequence SPPPPAPPPT. The segment covering 796-805 has biased composition (basic and acidic residues); it reads EKGQQHEAPD. The tract at residues 796–824 is disordered; the sequence is EKGQQHEAPDSPKIGPPGDGETNPGGSIS. 2 positions are modified to phosphoserine: serine 806 and serine 1356. Position 1360 is a phosphothreonine (threonine 1360). Polar residues-rich tracts occupy residues 1585 to 1595 and 1901 to 1910; these read VSKSDCNSSGS and TPSSVDQSPS. 4 disordered regions span residues 1585 to 1608, 1898 to 2092, 2114 to 2218, and 2469 to 2508; these read VSKSDCNSSGSGDEREKSNSCHSS, KADT…NQYA, QALS…GMAP, and MGGGAGGGMGAGPQQGGGAVGGGAGGGMVPQQQSMNQQQT. Basic residues predominate over residues 1919–1933; that stretch reads GRGKGTTTRKRKPKN. Low complexity-rich tracts occupy residues 1938–2038 and 2045–2055; these read PVVN…QQLN and QPNPQMNFMQQ. Residues 2056–2066 are compositionally biased toward gly residues; the sequence is GPGGGGAGPQG. Low complexity-rich tracts occupy residues 2067–2080, 2121–2132, and 2139–2205; these read MPGQQQQWHNAPQQ, RQRQPFQQQAQQ, and NPMQ…QQQQ. Positions 2469–2496 are enriched in gly residues; that stretch reads MGGGAGGGMGAGPQQGGGAVGGGAGGGM. A compositionally biased stretch (low complexity) spans 2497-2507; it reads VPQQQSMNQQQ.

This sequence belongs to the Mediator complex subunit 12 family. As to quaternary structure, component of the Cdk8 module of the Mediator complex, composed of CycC, Cdk8, kto and skd.

The protein resides in the nucleus. Component of the Mediator complex, a coactivator involved in regulated gene transcription of nearly all RNA polymerase II-dependent genes. Mediator functions as a bridge to convey information from gene-specific regulatory proteins to the basal RNA polymerase II transcription machinery. Mediator is recruited to promoters by direct interactions with regulatory proteins and serves as a scaffold for the assembly of a functional preinitiation complex with RNA polymerase II and the general transcription factors. Required for leg and eye development and macrochaete specification or differentiation. The polypeptide is Mediator of RNA polymerase II transcription subunit 12 (kto) (Drosophila melanogaster (Fruit fly)).